A 256-amino-acid chain; its full sequence is MSNDIFPNKFKAALAAKEIQIGCWSALASPISTEVLGLAGFDWLVLDGEHAPNDITTFIPQLMALKGSRSAPVVRVPTNEPVIIKRLLDIGFYNFLIPFVENVEEAVQAVASTRYPPEGIRGVSVSHRANMFGTVPDYFSQSNKNITILVQIESQHGVDNVDAIAATDGVDGIFVGPSDLAAAFGHLGNANHPEVQRAIQHIFERAKAHGKPSGILAPVEADARRYLEWGATFVAVGSDLGVFRSATQKLADSFKK.

The Proton acceptor role is filled by H50. Residue Q151 coordinates substrate. E153 provides a ligand contact to Mg(2+). Positions 178 and 179 each coordinate substrate. A Mg(2+)-binding site is contributed by D179.

Belongs to the HpcH/HpaI aldolase family. KDGluc aldolase subfamily. Homohexamer; trimer of dimers. Mg(2+) serves as cofactor.

The enzyme catalyses 5-dehydro-4-deoxy-D-glucarate = 2-hydroxy-3-oxopropanoate + pyruvate. It catalyses the reaction 2-dehydro-3-deoxy-D-glucarate = 2-hydroxy-3-oxopropanoate + pyruvate. It functions in the pathway carbohydrate acid metabolism; galactarate degradation; D-glycerate from galactarate: step 2/3. Its function is as follows. Catalyzes the reversible retro-aldol cleavage of both 5-keto-4-deoxy-D-glucarate and 2-keto-3-deoxy-D-glucarate to pyruvate and tartronic semialdehyde. The chain is 5-keto-4-deoxy-D-glucarate aldolase from Enterobacter sp. (strain 638).